The sequence spans 647 residues: 1-phosphatidylinositol 4,5-bisphosphate phosphodiesterase zeta-1 (647 aa).

Positions 43 to 78 (CHFAHVKHIFKENDRQNQGRITIEEFRAIYRCIVHR) constitute an EF-hand domain. Residues 163–307 (QDMNHPLSDY…LKFKILVKNR (145 aa)) form the PI-PLC X-box domain. Residues His-178 and His-223 contribute to the active site. In terms of domain architecture, PI-PLC Y-box spans 386–502 (LSDLVIYTKA…GYILKPDILR (117 aa)). Positions 502–627 (RDTTLGFNPN…KGYRRVPLFS (126 aa)) constitute a C2 domain.

Interacts via its C2 domain with PtdIns(3)P and, to a lesser extent, PtdIns(5)P in vitro. It depends on Ca(2+) as a cofactor. As to expression, highly expressed in postpuberal testis, where expression is sperm cell-specific. Also expressed in brain of both sexes.

It localises to the nucleus. The protein localises to the cytoplasm. Its subcellular location is the perinuclear region. It carries out the reaction a 1,2-diacyl-sn-glycero-3-phospho-(1D-myo-inositol-4,5-bisphosphate) + H2O = 1D-myo-inositol 1,4,5-trisphosphate + a 1,2-diacyl-sn-glycerol + H(+). The production of the second messenger molecules diacylglycerol (DAG) and inositol 1,4,5-trisphosphate (IP3) is mediated by activated phosphatidylinositol-specific phospholipase C enzymes. In vitro, hydrolyzes PtdIns(4,5)P2 in a Ca(2+)-dependent manner. Triggers intracellular Ca(2+) oscillations in oocytes solely during M phase and is involved in inducing oocyte activation and initiating embryonic development up to the blastocyst stage. Is therefore a strong candidate for the egg-activating soluble sperm factor that is transferred from the sperm into the egg cytoplasm following gamete membrane fusion. May exert an inhibitory effect on phospholipase-C-coupled processes that depend on calcium ions and protein kinase C, including CFTR trafficking and function. This Mus musculus (Mouse) protein is 1-phosphatidylinositol 4,5-bisphosphate phosphodiesterase zeta-1.